Reading from the N-terminus, the 780-residue chain is Protein SEY1 (780 aa).

Residues 1–680 (MDSKEEAIQL…KRSMIKTTTH (680 aa)) are Cytoplasmic-facing. One can recognise a GB1/RHD3-type G domain in the interval 35 to 265 (GVNYHVISVF…NEDYYFKPEY (231 aa)). 45–52 (GSQSSGKS) contacts GTP. Residues 440–463 (EVKEEVVKRFENDLKETSDKLRVT) are a coiled coil. A helical transmembrane segment spans residues 681–701 (IPLWIYAIIVVLGWNEFMMVI). Topologically, residues 702–704 (RNP) are lumenal. Residues 705–725 (LFVTLTILILVSFYFINKFDL) form a helical membrane-spanning segment. The Cytoplasmic segment spans residues 726–780 (WGPVKSVAQTAAGETIGTIKTKLRDFVLEEHEKTPKIQSEKSNSDSEKVVENEKS). Residues 756–780 (HEKTPKIQSEKSNSDSEKVVENEKS) form a disordered region.

It belongs to the TRAFAC class dynamin-like GTPase superfamily. GB1/RHD3 GTPase family. RHD3 subfamily.

It localises to the endoplasmic reticulum membrane. Cooperates with the reticulon proteins and tubule-shaping DP1 family proteins to generate and maintain the structure of the tubular endoplasmic reticulum network. Has GTPase activity, which is required for its function in ER organization. The protein is Protein SEY1 of Vanderwaltozyma polyspora (strain ATCC 22028 / DSM 70294 / BCRC 21397 / CBS 2163 / NBRC 10782 / NRRL Y-8283 / UCD 57-17) (Kluyveromyces polysporus).